A 288-amino-acid chain; its full sequence is Shikimate dehydrogenase (NADP(+)) (288 aa).

Residues 21 to 23 (SLS) and T68 contribute to the shikimate site. Residue K72 is the Proton acceptor of the active site. Shikimate contacts are provided by N93 and D108. Residues 132–136 (GNGGA) and L230 each bind NADP(+). Y232 is a binding site for shikimate. G253 contacts NADP(+).

It belongs to the shikimate dehydrogenase family. In terms of assembly, homodimer.

It catalyses the reaction shikimate + NADP(+) = 3-dehydroshikimate + NADPH + H(+). Its pathway is metabolic intermediate biosynthesis; chorismate biosynthesis; chorismate from D-erythrose 4-phosphate and phosphoenolpyruvate: step 4/7. Involved in the biosynthesis of the chorismate, which leads to the biosynthesis of aromatic amino acids. Catalyzes the reversible NADPH linked reduction of 3-dehydroshikimate (DHSA) to yield shikimate (SA). The polypeptide is Shikimate dehydrogenase (NADP(+)) (Crocosphaera subtropica (strain ATCC 51142 / BH68) (Cyanothece sp. (strain ATCC 51142))).